Here is a 113-residue protein sequence, read N- to C-terminus: Small ribosomal subunit protein bS6 (113 aa).

The protein belongs to the bacterial ribosomal protein bS6 family.

In terms of biological role, binds together with bS18 to 16S ribosomal RNA. This Synechocystis sp. (strain ATCC 27184 / PCC 6803 / Kazusa) protein is Small ribosomal subunit protein bS6 (rpsF).